A 514-amino-acid chain; its full sequence is Bifunctional purine biosynthesis protein PurH (514 aa).

In terms of domain architecture, MGS-like spans 1–142 (MLALLSVSDK…KNFRHVSVVV (142 aa)).

The protein belongs to the PurH family.

The enzyme catalyses (6R)-10-formyltetrahydrofolate + 5-amino-1-(5-phospho-beta-D-ribosyl)imidazole-4-carboxamide = 5-formamido-1-(5-phospho-D-ribosyl)imidazole-4-carboxamide + (6S)-5,6,7,8-tetrahydrofolate. It catalyses the reaction IMP + H2O = 5-formamido-1-(5-phospho-D-ribosyl)imidazole-4-carboxamide. Its pathway is purine metabolism; IMP biosynthesis via de novo pathway; 5-formamido-1-(5-phospho-D-ribosyl)imidazole-4-carboxamide from 5-amino-1-(5-phospho-D-ribosyl)imidazole-4-carboxamide (10-formyl THF route): step 1/1. The protein operates within purine metabolism; IMP biosynthesis via de novo pathway; IMP from 5-formamido-1-(5-phospho-D-ribosyl)imidazole-4-carboxamide: step 1/1. This is Bifunctional purine biosynthesis protein PurH from Myxococcus xanthus (strain DK1622).